The primary structure comprises 306 residues: Small ribosomal subunit biogenesis GTPase RsgA (306 aa).

Positions 77–236 (KNELKRPNVA…IVDTPGFSKL (160 aa)) constitute a CP-type G domain. Residues 126–129 (SKID) and 179–187 (GQTGVGKST) contribute to the GTP site. The Zn(2+) site is built by Cys260, Cys266, His268, and Cys274.

It belongs to the TRAFAC class YlqF/YawG GTPase family. RsgA subfamily. In terms of assembly, monomer. Associates with 30S ribosomal subunit, binds 16S rRNA. The cofactor is Zn(2+).

The protein localises to the cytoplasm. Functionally, one of several proteins that assist in the late maturation steps of the functional core of the 30S ribosomal subunit. Helps release RbfA from mature subunits. May play a role in the assembly of ribosomal proteins into the subunit. Circularly permuted GTPase that catalyzes slow GTP hydrolysis, GTPase activity is stimulated by the 30S ribosomal subunit. This is Small ribosomal subunit biogenesis GTPase RsgA from Onion yellows phytoplasma (strain OY-M).